The following is a 97-amino-acid chain: UstYa family oxidase VicYc (97 aa).

Short sequence motifs (HXXHC) lie at residues 11 to 15 and 38 to 42; these read HELHC and HANHC.

It belongs to the ustYa family.

The protein operates within mycotoxin biosynthesis. Functionally, ustYa family oxidase, part of the gene cluster that mediates the biosynthesis of the secondary metabolite victorin, the molecular basis for Victoria blight of oats. The role of vicYc within the pathway has still to be determined. The pathway starts with the processing of the precursor vicA1 by several endopeptidases including kexin proteases as well as the cluster-specific S28 family peptidases vicPa and vicPb to produce 7 identical copies of the hexapeptide Gly-Leu-Lys-Leu-Ala-Phe. After being excised from the precursor peptide, the core peptides are cyclized and modified post-translationally by enzymes encoded within the gene cluster. The ustYa family oxidase vicYb is required for the formation of the macrocycle in victorin and the copper amine oxidases (CAOs) vicK1 and vicK2 are responsible for converting victorin to the active form by oxidizing the N-terminal glycyl residue in the peptides to glyoxylate. Relaxed substrate specificity of enzymes in the victorin biosynthetic pathway results in a metabolic grid that produces a set of analogs including victorinines B, C, E or HV-toxin M. The sequence is that of UstYa family oxidase VicYc from Bipolaris victoriae (strain FI3) (Victoria blight of oats agent).